A 718-amino-acid polypeptide reads, in one-letter code: Methionine--tRNA ligase (718 aa).

Positions 27-37 (PYANGQIHIGH) match the 'HIGH' region motif. The Zn(2+) site is built by C158, C161, C171, and C174. A 'KMSKS' region motif is present at residues 348-352 (KMSKS). K351 is an ATP binding site. The 107-residue stretch at 612 to 718 (DFAKIDLRIA…SGAKPGMRVK (107 aa)) folds into the tRNA-binding domain.

Belongs to the class-I aminoacyl-tRNA synthetase family. MetG type 1 subfamily. As to quaternary structure, homodimer. Zn(2+) serves as cofactor.

The protein resides in the cytoplasm. The catalysed reaction is tRNA(Met) + L-methionine + ATP = L-methionyl-tRNA(Met) + AMP + diphosphate. Functionally, is required not only for elongation of protein synthesis but also for the initiation of all mRNA translation through initiator tRNA(fMet) aminoacylation. The protein is Methionine--tRNA ligase of Burkholderia thailandensis (strain ATCC 700388 / DSM 13276 / CCUG 48851 / CIP 106301 / E264).